The following is a 413-amino-acid chain: Histidine--tRNA ligase (413 aa).

This sequence belongs to the class-II aminoacyl-tRNA synthetase family. In terms of assembly, homodimer.

The protein resides in the cytoplasm. The enzyme catalyses tRNA(His) + L-histidine + ATP = L-histidyl-tRNA(His) + AMP + diphosphate + H(+). The polypeptide is Histidine--tRNA ligase (hisS) (Rickettsia prowazekii (strain Madrid E)).